Here is a 477-residue protein sequence, read N- to C-terminus: Erythritol/L-threitol-binding protein (477 aa).

The tat-type signal signal peptide spans 1–38 (MMSRESQPGLHRQLSRRNMLAAMGLAGAAAVSLPVLSA).

Belongs to the bacterial solute-binding protein 1 family. In terms of processing, predicted to be exported by the Tat system. The position of the signal peptide cleavage has not been experimentally proven.

In terms of biological role, part of an ABC transporter complex involved in erythritol/L-threitol import. Binds erythritol and L-threitol. Functions in the transport for the degradation pathways of erythritol and L-threitol, that allow M.smegmatis to grow on these compounds as the sole carbon source. The sequence is that of Erythritol/L-threitol-binding protein from Mycolicibacterium smegmatis (strain ATCC 700084 / mc(2)155) (Mycobacterium smegmatis).